Here is a 200-residue protein sequence, read N- to C-terminus: dITP/XTP pyrophosphatase (200 aa).

7–12 serves as a coordination point for substrate; sequence TSNKHK. Mg(2+) is bound by residues Glu-38 and Asp-73. The active-site Proton acceptor is Asp-73. Substrate contacts are provided by residues Ser-74, 154-157, Lys-177, and 182-183; these read FGYD and HR.

This sequence belongs to the HAM1 NTPase family. Homodimer. Mg(2+) is required as a cofactor.

It carries out the reaction XTP + H2O = XMP + diphosphate + H(+). The enzyme catalyses dITP + H2O = dIMP + diphosphate + H(+). It catalyses the reaction ITP + H2O = IMP + diphosphate + H(+). Functionally, pyrophosphatase that catalyzes the hydrolysis of nucleoside triphosphates to their monophosphate derivatives, with a high preference for the non-canonical purine nucleotides XTP (xanthosine triphosphate), dITP (deoxyinosine triphosphate) and ITP. Seems to function as a house-cleaning enzyme that removes non-canonical purine nucleotides from the nucleotide pool, thus preventing their incorporation into DNA/RNA and avoiding chromosomal lesions. The chain is dITP/XTP pyrophosphatase from Campylobacter jejuni subsp. jejuni serotype O:6 (strain 81116 / NCTC 11828).